Reading from the N-terminus, the 599-residue chain is NADH-quinone oxidoreductase subunit C/D (599 aa).

An NADH dehydrogenase I subunit C region spans residues 1-189 (MTDLTTHDLA…DPFELTKQKE (189 aa)). The NADH dehydrogenase I subunit D stretch occupies residues 213-599 (DFMFLNLGPN…IDFVMSDVDR (387 aa)).

In the N-terminal section; belongs to the complex I 30 kDa subunit family. It in the C-terminal section; belongs to the complex I 49 kDa subunit family. NDH-1 is composed of 13 different subunits. Subunits NuoB, CD, E, F, and G constitute the peripheral sector of the complex.

It localises to the cell inner membrane. The catalysed reaction is a quinone + NADH + 5 H(+)(in) = a quinol + NAD(+) + 4 H(+)(out). NDH-1 shuttles electrons from NADH, via FMN and iron-sulfur (Fe-S) centers, to quinones in the respiratory chain. The immediate electron acceptor for the enzyme in this species is believed to be ubiquinone. Couples the redox reaction to proton translocation (for every two electrons transferred, four hydrogen ions are translocated across the cytoplasmic membrane), and thus conserves the redox energy in a proton gradient. The chain is NADH-quinone oxidoreductase subunit C/D from Pectobacterium atrosepticum (strain SCRI 1043 / ATCC BAA-672) (Erwinia carotovora subsp. atroseptica).